The sequence spans 97 residues: Co-chaperonin GroES (97 aa).

The protein belongs to the GroES chaperonin family. As to quaternary structure, heptamer of 7 subunits arranged in a ring. Interacts with the chaperonin GroEL.

It localises to the cytoplasm. Its function is as follows. Together with the chaperonin GroEL, plays an essential role in assisting protein folding. The GroEL-GroES system forms a nano-cage that allows encapsulation of the non-native substrate proteins and provides a physical environment optimized to promote and accelerate protein folding. GroES binds to the apical surface of the GroEL ring, thereby capping the opening of the GroEL channel. This Erwinia tasmaniensis (strain DSM 17950 / CFBP 7177 / CIP 109463 / NCPPB 4357 / Et1/99) protein is Co-chaperonin GroES.